We begin with the raw amino-acid sequence, 903 residues long: Protein translocase subunit SecA (903 aa).

ATP contacts are provided by residues Gln-87, Gly-105 to Thr-109, and Asp-507. Disordered stretches follow at residues Glu-565–Gly-584 and Ala-855–Gln-877. 4 residues coordinate Zn(2+): Cys-887, Cys-889, Cys-898, and His-899.

This sequence belongs to the SecA family. In terms of assembly, monomer and homodimer. Part of the essential Sec protein translocation apparatus which comprises SecA, SecYEG and auxiliary proteins SecDF-YajC and YidC. It depends on Zn(2+) as a cofactor.

The protein localises to the cell inner membrane. It localises to the cytoplasm. It carries out the reaction ATP + H2O + cellular proteinSide 1 = ADP + phosphate + cellular proteinSide 2.. Its function is as follows. Part of the Sec protein translocase complex. Interacts with the SecYEG preprotein conducting channel. Has a central role in coupling the hydrolysis of ATP to the transfer of proteins into and across the cell membrane, serving both as a receptor for the preprotein-SecB complex and as an ATP-driven molecular motor driving the stepwise translocation of polypeptide chains across the membrane. This Chromobacterium violaceum (strain ATCC 12472 / DSM 30191 / JCM 1249 / CCUG 213 / NBRC 12614 / NCIMB 9131 / NCTC 9757 / MK) protein is Protein translocase subunit SecA.